The following is a 317-amino-acid chain: Melanocyte-stimulating hormone receptor (317 aa).

Over 1 to 37 the chain is Extracellular; the sequence is MPVLGSQRRLLGSLNCTPPATFPLMLAPNRTGPQCLE. A glycan (N-linked (GlcNAc...) asparagine) is linked at asparagine 29. A helical membrane pass occupies residues 38–63; the sequence is VSIPNGLFLSLGLVSLVENVLVVAAI. Over 64 to 72 the chain is Cytoplasmic; that stretch reads AKNSNLHSP. Residues 73–93 traverse the membrane as a helical segment; the sequence is MYYFICCLAVSDLLVSVSNVL. The Extracellular segment spans residues 94 to 118; it reads ETAVMLLLEAGALAARAAVVQQLDN. A helical membrane pass occupies residues 119–140; that stretch reads VIDVLICGSMVSSLCFLGAIAV. Residues 141-163 are Cytoplasmic-facing; that stretch reads DRYISIFYALRYHSVVTLPRAWR. A helical membrane pass occupies residues 164-183; the sequence is IIAAIWVASILTSLLFITYY. Residues 184–191 are Extracellular-facing; the sequence is NHTVVLLC. Residues 192–211 form a helical membrane-spanning segment; the sequence is LVGFFIAMLALMAVLYVHML. At 212-240 the chain is on the cytoplasmic side; sequence ARACQHARGIARLQKRQRPIHRGFGLKGA. A helical membrane pass occupies residues 241–266; the sequence is ATLTILLGVFFLCWGPFFLHLSLIVL. Residues 267–279 are Extracellular-facing; that stretch reads CPQHPTCGCIFKN. A helical transmembrane segment spans residues 280-300; the sequence is FNLFLALIICNAIVDPLIYAF. Residues 301–317 are Cytoplasmic-facing; the sequence is RSQELRKTLQEVLQCSW. A lipid anchor (S-palmitoyl cysteine) is attached at cysteine 315.

The protein belongs to the G-protein coupled receptor 1 family. In terms of assembly, interacts with MGRN1, but does not undergo MGRN1-mediated ubiquitination; this interaction competes with GNAS-binding and thus inhibits agonist-induced cAMP production. Interacts with OPN3; the interaction results in a decrease in MC1R-mediated cAMP signaling and ultimately a decrease in melanin production in melanocytes.

The protein resides in the cell membrane. In terms of biological role, receptor for MSH (alpha, beta and gamma) and ACTH. The activity of this receptor is mediated by G proteins which activate adenylate cyclase. Mediates melanogenesis, the production of eumelanin (black/brown) and phaeomelanin (red/yellow), via regulation of cAMP signaling in melanocytes. This chain is Melanocyte-stimulating hormone receptor (MC1R), found in Rangifer tarandus (Reindeer).